We begin with the raw amino-acid sequence, 159 residues long: uncharacterized protein (159 aa).

2 disordered regions span residues 1-29 and 114-159; these read MHQT…TSES and TRGG…NENT. Over residues 15-29 the composition is skewed to polar residues; sequence SFSNESPTSRETSES.

This is an uncharacterized protein from Homo sapiens (Human).